A 427-amino-acid chain; its full sequence is Enolase (427 aa).

Gln163 is a binding site for (2R)-2-phosphoglycerate. Glu205 serves as the catalytic Proton donor. Mg(2+)-binding residues include Asp242, Glu285, and Asp312. 4 residues coordinate (2R)-2-phosphoglycerate: Lys337, Arg366, Ser367, and Lys388. Lys337 serves as the catalytic Proton acceptor.

Belongs to the enolase family. Requires Mg(2+) as cofactor.

The protein resides in the cytoplasm. It localises to the secreted. The protein localises to the cell surface. It catalyses the reaction (2R)-2-phosphoglycerate = phosphoenolpyruvate + H2O. It functions in the pathway carbohydrate degradation; glycolysis; pyruvate from D-glyceraldehyde 3-phosphate: step 4/5. Its function is as follows. Catalyzes the reversible conversion of 2-phosphoglycerate (2-PG) into phosphoenolpyruvate (PEP). It is essential for the degradation of carbohydrates via glycolysis. In Dechloromonas aromatica (strain RCB), this protein is Enolase.